The following is a 1204-amino-acid chain: TPR repeat-containing protein DDB_G0287999 (1204 aa).

Positions 32–48 (TTDTTTTTSTSTTTDTD) are enriched in low complexity. The tract at residues 32–55 (TTDTTTTTSTSTTTDTDTNSEKSN) is disordered. TPR repeat units lie at residues 263-296 (SKGL…YKDL), 379-412 (NDSN…DQLY), and 583-617 (IQHF…GSVT). The segment at 360-387 (QPPPQEQQLMDDDSNSNSNNDSNNIIKN) is disordered. Over residues 374–387 (NSNSNNDSNNIIKN) the composition is skewed to low complexity. 2 disordered regions span residues 639–660 (NNNN…NNNN) and 761–797 (DDND…KTTT). Residues 766–778 (DNNNNNNNNNNNN) are compositionally biased toward low complexity.

This is TPR repeat-containing protein DDB_G0287999 from Dictyostelium discoideum (Social amoeba).